A 242-amino-acid chain; its full sequence is Outer membrane protein class 4 (242 aa).

The N-terminal stretch at 1–22 (MTKQLKLSALFVALLASGTAVA) is a signal peptide. 7 tandem repeats follow at residues 69-70 (AP), 71-72 (EP), 73-74 (EP), 75-76 (EP), 77-78 (EP), 79-80 (AP), and 81-82 (AP). The tract at residues 69-82 (APEPEPEPEPAPAP) is 7 X 2 AA tandem repeats of X-P. One can recognise an OmpA-like domain in the interval 92-229 (YVDETISLSA…RVDVKIRSIV (138 aa)). Cysteines 191 and 214 form a disulfide.

It belongs to the outer membrane OOP (TC 1.B.6) superfamily.

Its subcellular location is the cell outer membrane. This chain is Outer membrane protein class 4 (rmpM), found in Neisseria meningitidis serogroup A / serotype 4A (strain DSM 15465 / Z2491).